Reading from the N-terminus, the 1387-residue chain is DNA-directed RNA polymerase subunit beta'' (1387 aa).

Residues Cys-224, Cys-295, Cys-302, and Cys-305 each contribute to the Zn(2+) site. Residues 883-903 (SHTGKRNDPAGSGLIPDNGSD) form a disordered region.

The protein belongs to the RNA polymerase beta' chain family. RpoC2 subfamily. In plastids the minimal PEP RNA polymerase catalytic core is composed of four subunits: alpha, beta, beta', and beta''. When a (nuclear-encoded) sigma factor is associated with the core the holoenzyme is formed, which can initiate transcription. It depends on Zn(2+) as a cofactor.

The protein localises to the plastid. The protein resides in the chloroplast. It catalyses the reaction RNA(n) + a ribonucleoside 5'-triphosphate = RNA(n+1) + diphosphate. Functionally, DNA-dependent RNA polymerase catalyzes the transcription of DNA into RNA using the four ribonucleoside triphosphates as substrates. This is DNA-directed RNA polymerase subunit beta'' from Platanus occidentalis (Sycamore).